The sequence spans 199 residues: MTQKLDTLQAAIERVIGDRIVHLVRDRGELTLTVKATDYAAIGKTLRDHPDLGFEQLIDICGVDYSGYKDGGYEGLRYAAVSHLLSVQHNWRLRLKVFAPDDDFPLVASLTPIWSGANWFEREAFDMYGIVFDGHTDLRRILTDYGFIGHPMRKDFPVTGHVEMRYDPEQKRVIYQPVSIEPREITPRIIREDNYGGLH.

It belongs to the complex I 30 kDa subunit family. As to quaternary structure, NDH-1 is composed of 14 different subunits. Subunits NuoB, C, D, E, F, and G constitute the peripheral sector of the complex.

The protein resides in the cell inner membrane. The enzyme catalyses a quinone + NADH + 5 H(+)(in) = a quinol + NAD(+) + 4 H(+)(out). Functionally, NDH-1 shuttles electrons from NADH, via FMN and iron-sulfur (Fe-S) centers, to quinones in the respiratory chain. The immediate electron acceptor for the enzyme in this species is believed to be ubiquinone. Couples the redox reaction to proton translocation (for every two electrons transferred, four hydrogen ions are translocated across the cytoplasmic membrane), and thus conserves the redox energy in a proton gradient. In Leptothrix cholodnii (strain ATCC 51168 / LMG 8142 / SP-6) (Leptothrix discophora (strain SP-6)), this protein is NADH-quinone oxidoreductase subunit C.